The primary structure comprises 329 residues: Malate dehydrogenase (329 aa).

12-18 (GAAGQIG) contacts NAD(+). Substrate contacts are provided by arginine 93 and arginine 99. NAD(+) contacts are provided by residues asparagine 106, glutamine 113, and 130–132 (VGN). Positions 132 and 163 each coordinate substrate. The active-site Proton acceptor is the histidine 188.

It belongs to the LDH/MDH superfamily. MDH type 2 family.

It catalyses the reaction (S)-malate + NAD(+) = oxaloacetate + NADH + H(+). Its activity is regulated as follows. Strongly inhibited by Hg(2+) and Zn(2+). Activated by Na(+), NH(4)(+), Ca(2+), Cu(2+) and Mg(2+). Catalyzes the reversible oxidation of malate to oxaloacetate. Exhibits remarkably higher catalytic efficiency for oxaloacetate reduction than for malate oxidation in vitro. Highly specific for NAD(H). Can also use NADPH for oxaloacetate reduction, but catalytic efficiency is 97-fold higher with NADH. No activity detected with NADP(+) and malate. The sequence is that of Malate dehydrogenase from Streptomyces avermitilis (strain ATCC 31267 / DSM 46492 / JCM 5070 / NBRC 14893 / NCIMB 12804 / NRRL 8165 / MA-4680).